The following is a 360-amino-acid chain: UDP-N-acetylglucosamine--N-acetylmuramyl-(pentapeptide) pyrophosphoryl-undecaprenol N-acetylglucosamine transferase (360 aa).

UDP-N-acetyl-alpha-D-glucosamine-binding residues include Ser198 and Gln289.

Belongs to the glycosyltransferase 28 family. MurG subfamily.

It is found in the cell membrane. It carries out the reaction Mur2Ac(oyl-L-Ala-gamma-D-Glu-L-Lys-D-Ala-D-Ala)-di-trans,octa-cis-undecaprenyl diphosphate + UDP-N-acetyl-alpha-D-glucosamine = beta-D-GlcNAc-(1-&gt;4)-Mur2Ac(oyl-L-Ala-gamma-D-Glu-L-Lys-D-Ala-D-Ala)-di-trans,octa-cis-undecaprenyl diphosphate + UDP + H(+). Its pathway is cell wall biogenesis; peptidoglycan biosynthesis. In terms of biological role, cell wall formation. Catalyzes the transfer of a GlcNAc subunit on undecaprenyl-pyrophosphoryl-MurNAc-pentapeptide (lipid intermediate I) to form undecaprenyl-pyrophosphoryl-MurNAc-(pentapeptide)GlcNAc (lipid intermediate II). The sequence is that of UDP-N-acetylglucosamine--N-acetylmuramyl-(pentapeptide) pyrophosphoryl-undecaprenol N-acetylglucosamine transferase from Streptococcus pyogenes serotype M4 (strain MGAS10750).